Consider the following 46-residue polypeptide: Large ribosomal subunit protein bL34 (46 aa).

It belongs to the bacterial ribosomal protein bL34 family.

This is Large ribosomal subunit protein bL34 from Trichodesmium erythraeum (strain IMS101).